Reading from the N-terminus, the 631-residue chain is Phosphomethylpyrimidine synthase (631 aa).

Substrate-binding positions include N239, M268, Y297, H333, 353-355 (SRG), 394-397 (DGLR), and E433. A Zn(2+)-binding site is contributed by H437. Residue Y460 participates in substrate binding. H501 lines the Zn(2+) pocket. [4Fe-4S] cluster-binding residues include C581, C584, and C589.

It belongs to the ThiC family. In terms of assembly, homodimer. It depends on [4Fe-4S] cluster as a cofactor.

It catalyses the reaction 5-amino-1-(5-phospho-beta-D-ribosyl)imidazole + S-adenosyl-L-methionine = 4-amino-2-methyl-5-(phosphooxymethyl)pyrimidine + CO + 5'-deoxyadenosine + formate + L-methionine + 3 H(+). It participates in cofactor biosynthesis; thiamine diphosphate biosynthesis. Functionally, catalyzes the synthesis of the hydroxymethylpyrimidine phosphate (HMP-P) moiety of thiamine from aminoimidazole ribotide (AIR) in a radical S-adenosyl-L-methionine (SAM)-dependent reaction. The chain is Phosphomethylpyrimidine synthase from Escherichia fergusonii (strain ATCC 35469 / DSM 13698 / CCUG 18766 / IAM 14443 / JCM 21226 / LMG 7866 / NBRC 102419 / NCTC 12128 / CDC 0568-73).